The primary structure comprises 281 residues: Pantothenate synthetase (281 aa).

An ATP-binding site is contributed by 30-37 (MGNLHQGH). The active-site Proton donor is the His37. Gln61 contacts (R)-pantoate. Residue Gln61 participates in beta-alanine binding. 148–151 (GQKD) lines the ATP pocket. Gln154 serves as a coordination point for (R)-pantoate. Residues Ala177 and 185–188 (LSSR) each bind ATP.

Belongs to the pantothenate synthetase family. In terms of assembly, homodimer.

It is found in the cytoplasm. It carries out the reaction (R)-pantoate + beta-alanine + ATP = (R)-pantothenate + AMP + diphosphate + H(+). The protein operates within cofactor biosynthesis; (R)-pantothenate biosynthesis; (R)-pantothenate from (R)-pantoate and beta-alanine: step 1/1. Its function is as follows. Catalyzes the condensation of pantoate with beta-alanine in an ATP-dependent reaction via a pantoyl-adenylate intermediate. The protein is Pantothenate synthetase of Acinetobacter baylyi (strain ATCC 33305 / BD413 / ADP1).